The following is a 200-amino-acid chain: MTSSDTPSLRLASASPRRRELLASIGVAVEVAPADIDETPLEDEAPAAYVERLARRKAQVGAEGTTLPTLGSDTAVVVGRRILGKPRDREDAIAMLSALSGTTHEVVTGIAVTGPQGMLSTHVVTRVTLRELQPDEIEAYWRSGEPVDKAGAYAIQGLAAIFVERIEGSHSAVVGLPLFETAKLLTRQGVSLWGERPAVP.

Asp73 acts as the Proton acceptor in catalysis.

The protein belongs to the Maf family. YhdE subfamily. The cofactor is a divalent metal cation.

The protein localises to the cytoplasm. The enzyme catalyses dTTP + H2O = dTMP + diphosphate + H(+). It carries out the reaction UTP + H2O = UMP + diphosphate + H(+). In terms of biological role, nucleoside triphosphate pyrophosphatase that hydrolyzes dTTP and UTP. May have a dual role in cell division arrest and in preventing the incorporation of modified nucleotides into cellular nucleic acids. The protein is dTTP/UTP pyrophosphatase of Chromohalobacter salexigens (strain ATCC BAA-138 / DSM 3043 / CIP 106854 / NCIMB 13768 / 1H11).